The chain runs to 257 residues: Receptor expression-enhancing protein 4 (257 aa).

Helical transmembrane passes span M1–Y21 and W42–F62. 2 positions are modified to phosphoserine: S152 and S194. Positions I159 to S257 are disordered. The residue at position 196 (T196) is a Phosphothreonine. S202 carries the phosphoserine modification. The residue at position 250 (T250) is a Phosphothreonine. S253 carries the post-translational modification Phosphoserine.

The protein belongs to the DP1 family.

It localises to the endoplasmic reticulum membrane. In terms of biological role, microtubule-binding protein required to ensure proper cell division and nuclear envelope reassembly by sequestering the endoplasmic reticulum away from chromosomes during mitosis. Probably acts by clearing the endoplasmic reticulum membrane from metaphase chromosomes. This is Receptor expression-enhancing protein 4 (Reep4) from Rattus norvegicus (Rat).